A 527-amino-acid chain; its full sequence is Arginine--tRNA ligase (527 aa).

The 'HIGH' region signature appears at Ala-111 to His-121.

This sequence belongs to the class-I aminoacyl-tRNA synthetase family. Monomer.

The protein resides in the cytoplasm. It catalyses the reaction tRNA(Arg) + L-arginine + ATP = L-arginyl-tRNA(Arg) + AMP + diphosphate. This is Arginine--tRNA ligase from Campylobacter concisus (strain 13826).